Consider the following 442-residue polypeptide: Trigger factor (442 aa).

In terms of domain architecture, PPIase FKBP-type spans 165 to 250 (DDRVIIDFEG…LQKVMAPELP (86 aa)).

This sequence belongs to the FKBP-type PPIase family. Tig subfamily.

The protein localises to the cytoplasm. The catalysed reaction is [protein]-peptidylproline (omega=180) = [protein]-peptidylproline (omega=0). Its function is as follows. Involved in protein export. Acts as a chaperone by maintaining the newly synthesized protein in an open conformation. Functions as a peptidyl-prolyl cis-trans isomerase. In Coxiella burnetii (strain CbuG_Q212) (Coxiella burnetii (strain Q212)), this protein is Trigger factor.